A 61-amino-acid chain; its full sequence is Large ribosomal subunit protein bL32 (61 aa).

Residues 1 to 16 (MAVPKKKTSKSRKNMR) are compositionally biased toward basic residues. Residues 1 to 20 (MAVPKKKTSKSRKNMRRAHD) form a disordered region.

This sequence belongs to the bacterial ribosomal protein bL32 family.

In Pelobacter propionicus (strain DSM 2379 / NBRC 103807 / OttBd1), this protein is Large ribosomal subunit protein bL32.